A 255-amino-acid chain; its full sequence is Pyridoxine 5'-phosphate synthase (255 aa).

The 3-amino-2-oxopropyl phosphate site is built by N8 and R19. H44 (proton acceptor) is an active-site residue. Positions 46 and 51 each coordinate 1-deoxy-D-xylulose 5-phosphate. E74 (proton acceptor) is an active-site residue. Position 111 (T111) interacts with 1-deoxy-D-xylulose 5-phosphate. Catalysis depends on H202, which acts as the Proton donor. Residues D203 and G225–H226 contribute to the 3-amino-2-oxopropyl phosphate site.

This sequence belongs to the PNP synthase family. Homooctamer; tetramer of dimers.

The protein resides in the cytoplasm. It carries out the reaction 3-amino-2-oxopropyl phosphate + 1-deoxy-D-xylulose 5-phosphate = pyridoxine 5'-phosphate + phosphate + 2 H2O + H(+). The protein operates within cofactor biosynthesis; pyridoxine 5'-phosphate biosynthesis; pyridoxine 5'-phosphate from D-erythrose 4-phosphate: step 5/5. Its function is as follows. Catalyzes the complicated ring closure reaction between the two acyclic compounds 1-deoxy-D-xylulose-5-phosphate (DXP) and 3-amino-2-oxopropyl phosphate (1-amino-acetone-3-phosphate or AAP) to form pyridoxine 5'-phosphate (PNP) and inorganic phosphate. This is Pyridoxine 5'-phosphate synthase from Xanthomonas oryzae pv. oryzae (strain PXO99A).